A 1321-amino-acid chain; its full sequence is Serine/threonine-protein kinase SIK3 (1321 aa).

The disordered stretch occupies residues 1 to 59; sequence MAAAAASGAGGAAGAGTGGAGPAGRLLPPPAPGSPAAPAAVSPAAGQPRPPAPASRGPM. A compositionally biased stretch (gly residues) spans 8–22; that stretch reads GAGGAAGAGTGGAGP. The span at 36 to 47 shows a compositional bias: low complexity; it reads AAPAAVSPAAGQ. Residues 66 to 317 form the Protein kinase domain; sequence YEIDRTIGKG…MEQICKHKWM (252 aa). Thr-71 carries the phosphothreonine modification. ATP contacts are provided by residues 72 to 80 and Lys-95; that span reads IGKGNFAVV. Position 113 is a phosphothreonine (Glu-113). Asp-188 (proton acceptor) is an active-site residue. Position 221 is a phosphothreonine; by LKB1 (Thr-221). The region spanning 344–384 is the UBA domain; that stretch reads PLNEDVLLAMEDMGLDKEQTLQSLRSDAYDHYSAIYSLLCD. Residue Thr-469 is modified to Phosphothreonine. Phosphoserine is present on residues Ser-551, Ser-591, and Ser-592. The tract at residues 585 to 614 is disordered; the sequence is TPVDEESSDGEPDQEAVQSSTYKDSNTLHL. The span at 587–598 shows a compositional bias: acidic residues; the sequence is VDEESSDGEPDQ. Residues 600-613 are compositionally biased toward polar residues; that stretch reads AVQSSTYKDSNTLH. Ser-626 and Ser-647 each carry phosphoserine. The tract at residues 727–772 is disordered; it reads IQPSSPPPNHPNNHLFRQPSNSPPPMSSAMIQPHGAASSSQFQGLP. Residues 763-772 show a composition bias toward polar residues; sequence ASSSQFQGLP. Ser-866 carries the post-translational modification Phosphoserine. The interval 894–945 is disordered; sequence LFSDQSRGSPSSYSPSTGVGFSPTQALKVPPLDQFPTFPPSAHQQPPHYTTS. Over residues 896–909 the composition is skewed to low complexity; it reads SDQSRGSPSSYSPS. Residues 935–945 are compositionally biased toward polar residues; that stretch reads AHQQPPHYTTS. The residue at position 978 (Ser-978) is a Phosphoserine. At Arg-986 the chain carries Omega-N-methylarginine. Residues 1256–1265 are compositionally biased toward polar residues; it reads SLMGSQQFQD. Positions 1256 to 1289 are disordered; sequence SLMGSQQFQDGENEECGASLGGHEHPDLSDGSQH.

Belongs to the protein kinase superfamily. CAMK Ser/Thr protein kinase family. SNF1 subfamily. As to quaternary structure, binds to and is activated by YWHAZ when phosphorylated on Thr-221. Interacts with 14-3-3 proteins. Interacts with HDAC4; this interaction leads to HDAC4 retention in the cytoplasm. Interacts with DEPTOR, MLST8/GbetaL, RICTOR and RPTOR. Mg(2+) is required as a cofactor. Post-translationally, phosphorylated at Thr-221 by STK11/LKB1 in complex with STE20-related adapter-alpha (STRADA) pseudo kinase and CAB39. Phosphorylation at Thr-221 is inhibited in response to PTHLH/PTHrP. Phosphorylated at Thr-469 and Ser-551 in response to cAMP signaling. As to expression, expressed in chondrocytes.

It is found in the cytoplasm. The catalysed reaction is L-seryl-[protein] + ATP = O-phospho-L-seryl-[protein] + ADP + H(+). It catalyses the reaction L-threonyl-[protein] + ATP = O-phospho-L-threonyl-[protein] + ADP + H(+). Its activity is regulated as follows. Activated by phosphorylation on Thr-221. Functionally, positive regulator of mTOR signaling that functions by triggering the degradation of DEPTOR, an mTOR inhibitor. Involved in the dynamic regulation of mTOR signaling in chondrocyte differentiation during skeletogenesis. Negatively regulates cAMP signaling pathway possibly by acting on CRTC2/TORC2 and CRTC3/TORC3. Prevents HDAC4 translocation to the nucleus. This is Serine/threonine-protein kinase SIK3 from Homo sapiens (Human).